The sequence spans 344 residues: Protein RecA (344 aa).

Gly65 to Thr72 provides a ligand contact to ATP.

It belongs to the RecA family.

Its subcellular location is the cytoplasm. Its function is as follows. Can catalyze the hydrolysis of ATP in the presence of single-stranded DNA, the ATP-dependent uptake of single-stranded DNA by duplex DNA, and the ATP-dependent hybridization of homologous single-stranded DNAs. It interacts with LexA causing its activation and leading to its autocatalytic cleavage. In Nitratiruptor sp. (strain SB155-2), this protein is Protein RecA.